We begin with the raw amino-acid sequence, 372 residues long: Cytochrome b (372 aa).

The next 4 membrane-spanning stretches (helical) occupy residues 25–45, 69–90, 105–125, and 170–190; these read FGSMLLTCLALQTMTGFFLAI, WMMQNLHAIGASMFFICIYIHI, WLSGTTLLIILMATAFFGYVL, and FFALHFILPFTIISMSSIHIM. Heme b-binding residues include His-75 and His-89. 2 residues coordinate heme b: His-174 and His-188. Position 193 (His-193) interacts with a ubiquinone. 4 helical membrane passes run 218 to 238, 280 to 300, 312 to 332, and 339 to 358; these read HKDMLMFTIMITMLFIIMSFT, LGGTVALVLSVTILLTMPFTH, LMQFMFWTLVATFITITWAAT, and FTSIGQVTAILYFLFFTMNP.

It belongs to the cytochrome b family. In terms of assembly, the cytochrome bc1 complex contains 3 respiratory subunits (MT-CYB, CYC1 and UQCRFS1), 2 core proteins (UQCRC1 and UQCRC2) and probably 6 low-molecular weight proteins. Requires heme b as cofactor.

The protein localises to the mitochondrion inner membrane. Functionally, component of the ubiquinol-cytochrome c reductase complex (complex III or cytochrome b-c1 complex) that is part of the mitochondrial respiratory chain. The b-c1 complex mediates electron transfer from ubiquinol to cytochrome c. Contributes to the generation of a proton gradient across the mitochondrial membrane that is then used for ATP synthesis. The protein is Cytochrome b (MT-CYB) of Pantherophis vulpinus (Western fox snake).